The chain runs to 1135 residues: Retinoblastoma-like protein 2 (1135 aa).

The interval 1–43 (MASGGNQSSPPPPAAAASSEEEEEDGDTADRAQPAGSPSHQIQ) is disordered. Residue Ser410 is modified to Phosphoserine. Residue Thr414 is modified to Phosphothreonine. The segment at 414 to 613 (TPVSTATHSL…DRIRDNENRV (200 aa)) is domain A. Positions 414–1021 (TPVSTATHSL…QTFAMKYSQA (608 aa)) are pocket; binds E1A. A glycan (O-linked (GlcNAc) serine) is linked at Ser417. The interval 614 to 824 (PTCEEVTPPH…QGQPLTSSSI (211 aa)) is spacer. Ser636 is modified (phosphoserine). Residue Thr639 is modified to Phosphothreonine. Disordered stretches follow at residues 649 to 698 (DAGG…PPQP), 806 to 825 (ISPG…SSIR), and 932 to 995 (RRNS…EEEE). Positions 656-674 (SVTSPTTLYDRYSSPTVST) are enriched in polar residues. Ser659, Ser669, and Ser684 each carry phosphoserine. The segment covering 806–818 (ISPGGQQQNQGQP) has biased composition (low complexity). A domain B region spans residues 825–1021 (RPRKTSSLSL…QTFAMKYSQA (197 aa)). Polar residues-rich tracts occupy residues 935-950 (SGSC…PTEL) and 958-969 (DSSPVMRSNSTL). Phosphoserine is present on residues Ser942, Ser946, Ser960, Ser965, and Ser967. A Phosphothreonine modification is found at Thr968. Residues 971 to 981 (VPQPSSAPPTP) are compositionally biased toward pro residues. Phosphoserine is present on residues Ser975 and Ser976. Thr980 carries the phosphothreonine modification. 4 positions are modified to phosphoserine: Ser1031, Ser1064, Ser1076, and Ser1108.

This sequence belongs to the retinoblastoma protein (RB) family. Interacts with AATF, KMT5B and KMT5C. Component of the DREAM complex (also named LINC complex) at least composed of E2F4, E2F5, LIN9, LIN37, LIN52, LIN54, MYBL1, MYBL2, RBL1, RBL2, RBBP4, TFDP1 and TFDP2. The complex exists in quiescent cells where it represses cell cycle-dependent genes. It dissociates in S phase when LIN9, LIN37, LIN52 and LIN54 form a subcomplex that binds to MYBL2. Interacts with USP4. Part of the peroxisome proliferator activated receptor alpha (PPAR-alpha) interacting complex (PRIC). Interacts with RINT1. Interacts with PML. Interacts with RBBP9. Interacts with CD53. Post-translationally, during G0 and early G1 phase of the cell cycle, phosphorylated on Ser-636 and on 5 sites within the domain B. Phosphorylation on Ser-669 in G1 leads to its ubiquitin-dependent proteolysis.

Its subcellular location is the nucleus. Functionally, key regulator of entry into cell division. Directly involved in heterochromatin formation by maintaining overall chromatin structure and, in particular, that of constitutive heterochromatin by stabilizing histone methylation. Recruits and targets histone methyltransferases KMT5B and KMT5C, leading to epigenetic transcriptional repression. Controls histone H4 'Lys-20' trimethylation. Probably acts as a transcription repressor by recruiting chromatin-modifying enzymes to promoters. Potent inhibitor of E2F-mediated trans-activation, associates preferentially with E2F5. Binds to cyclins A and E. Binds to and may be involved in the transforming capacity of the adenovirus E1A protein. May act as a tumor suppressor. The polypeptide is Retinoblastoma-like protein 2 (Rbl2) (Rattus norvegicus (Rat)).